The sequence spans 143 residues: uncharacterized protein (143 aa).

This is an uncharacterized protein from Archaeoglobus fulgidus (strain ATCC 49558 / DSM 4304 / JCM 9628 / NBRC 100126 / VC-16).